Reading from the N-terminus, the 129-residue chain is uncharacterized protein (129 aa).

Low complexity predominate over residues 85–108 (SSAADSDDSSSCSECDSDALLSDD). The disordered stretch occupies residues 85–110 (SSAADSDDSSSCSECDSDALLSDDGP).

This is an uncharacterized protein from Microplitis demolitor (Parasitoid wasp).